The sequence spans 69 residues: Small, acid-soluble spore protein I (69 aa).

The protein belongs to the SspI family.

The protein localises to the spore core. This is Small, acid-soluble spore protein I from Bacillus mycoides (strain KBAB4) (Bacillus weihenstephanensis).